The sequence spans 1574 residues: Myosin-2 (1574 aa).

Serine 2 is subject to N-acetylserine. The Myosin N-terminal SH3-like domain maps to 4–57; that stretch reads EVGTRCWYPHKELGWIGAEVIKNEFNDGKYHLELQLEDDEIVSVDTKDLNNDKD. One can recognise a Myosin motor domain in the interval 70–781; sequence EATEDLTSLS…MLAYLEKLRS (712 aa). 164 to 171 serves as a coordination point for ATP; sequence GESGAGKT. The segment at 443 to 523 is actin-binding; that stretch reads FIGVLDIYGF…LGILSLLDEE (81 aa). IQ domains are found at residues 784–806, 807–831, 832–855, 856–879, 880–902, and 903–932; these read MHNS…QYLQ, ISQA…NDEM, KVNC…VFSV, LRTI…KQEH, EYNA…RFLR, and TKKD…DAKS. Residues 933–1088 adopt a coiled-coil conformation; it reads VNHLKEVSYK…RLQTAMSLGT (156 aa). The non alpha-helical, tail domain stretch occupies residues 1087 to 1574; the sequence is GTVTTSVLPQ…VAQQVVQDGH (488 aa). Position 1097 is a phosphothreonine (threonine 1097). Serine 1121 carries the phosphoserine modification. Residues 1226–1501 form the Dilute domain; sequence AQVLTTIQKV…LRYVADIVKK (276 aa).

It belongs to the TRAFAC class myosin-kinesin ATPase superfamily. Myosin family. In terms of assembly, homodimer. Interacts with calmodulin (CMD1) and the myosin light chain MLC1 through its IQ repeats. Binds to the membrane receptors SEC4 and VAC17 to transport secretory vesicles and the vacuole, respectively. Binds to KAR9, which transports BIM1-coated cytoplasmic microtubules that are attached to the spindle pole body into the emerging bud, thereby correctly orienting the mitotic spindle. Interacts with YPT11 and MMR1 to accelerate mitochondrial distribution to the bud. Interacts with SHE4 and localizes it to the bud tip. Interacts with RHO3 and SMY1, putative regulators of MYO2 function. Interacts with SRO7.

The protein resides in the bud neck. It localises to the bud tip. Its function is as follows. Myosin heavy chain that is required for the cell cycle-regulated transport of various organelles and proteins for their segregation. Functions by binding with its tail domain to receptor proteins on organelles and exerting force with its N-terminal motor domain against actin filaments, thereby transporting its cargo along polarized actin cables. Essential for the delivery of secretory vesicles to sites of active growth during bud emergence and cytokinesis. Required for segregation and inheritance of peroxisomes, late Golgi compartments, mitochondria and the vacuole to the daughter cell during cell division. Also required for correct alignment of the spindle during mitosis. The polypeptide is Myosin-2 (MYO2) (Saccharomyces cerevisiae (strain ATCC 204508 / S288c) (Baker's yeast)).